Here is a 320-residue protein sequence, read N- to C-terminus: Esterase LipI (320 aa).

Catalysis depends on residues Ser-165, Asp-261, and His-291.

Belongs to the 'GDXG' lipolytic enzyme family.

The catalysed reaction is a fatty acid ester + H2O = an aliphatic alcohol + a fatty acid + H(+). The enzyme catalyses a butanoate ester + H2O = an aliphatic alcohol + butanoate + H(+). It catalyses the reaction an octanoate ester + H2O = an aliphatic alcohol + octanoate + H(+). It carries out the reaction decanoate ester + H2O = decanoate + an aliphatic alcohol + H(+). The catalysed reaction is an acetyl ester + H2O = an aliphatic alcohol + acetate + H(+). The enzyme catalyses a dodecanoate ester + H2O = an aliphatic alcohol + dodecanoate + H(+). Inhibited by ionic detergents SDS (anions) and CTAB (cationic). Strongly inhibited by Zn(2+). Esterase that can hydrolyze short-chain esters with the carbon chain containing 2 to 12 carbon atoms. In vitro, pNP-butyrate is the preferred substrate. The protein is Esterase LipI of Mycobacterium tuberculosis (strain ATCC 25618 / H37Rv).